The primary structure comprises 74 residues: Conotoxin ArMKLT2-041 (74 aa).

The N-terminal stretch at 1-22 (MKLTCVLIVAVLFLTACQLIAA) is a signal peptide. A propeptide spanning residues 23 to 46 (DDSRDLQKFPRRKMRDGMLNTKNT) is cleaved from the precursor. At Gln49 the chain carries Pyrrolidone carboxylic acid. Disulfide bonds link Cys50–Cys65, Cys57–Cys68, and Cys64–Cys73.

This sequence belongs to the conotoxin O1 superfamily. In terms of tissue distribution, expressed by the venom duct.

Its subcellular location is the secreted. This is Conotoxin ArMKLT2-041 from Conus arenatus (Sand-dusted cone).